The chain runs to 91 residues: Small ribosomal subunit protein uS19 (91 aa).

It belongs to the universal ribosomal protein uS19 family.

In terms of biological role, protein S19 forms a complex with S13 that binds strongly to the 16S ribosomal RNA. The protein is Small ribosomal subunit protein uS19 of Prochlorococcus marinus (strain NATL1A).